The chain runs to 969 residues: Isoleucine--tRNA ligase (969 aa).

Residues 68–78 carry the 'HIGH' region motif; it reads PYANGNLHMGH. Glu584 is a binding site for L-isoleucyl-5'-AMP. Positions 625–629 match the 'KMSKS' region motif; it reads KMSKS. Residue Lys628 participates in ATP binding. Zn(2+)-binding residues include Cys938, Cys941, Cys958, and Cys961.

It belongs to the class-I aminoacyl-tRNA synthetase family. IleS type 1 subfamily. As to quaternary structure, monomer. It depends on Zn(2+) as a cofactor.

The protein localises to the cytoplasm. The catalysed reaction is tRNA(Ile) + L-isoleucine + ATP = L-isoleucyl-tRNA(Ile) + AMP + diphosphate. Functionally, catalyzes the attachment of isoleucine to tRNA(Ile). As IleRS can inadvertently accommodate and process structurally similar amino acids such as valine, to avoid such errors it has two additional distinct tRNA(Ile)-dependent editing activities. One activity is designated as 'pretransfer' editing and involves the hydrolysis of activated Val-AMP. The other activity is designated 'posttransfer' editing and involves deacylation of mischarged Val-tRNA(Ile). This is Isoleucine--tRNA ligase from Prochlorococcus marinus (strain SARG / CCMP1375 / SS120).